A 440-amino-acid chain; its full sequence is MSSYSQLFAQHLDTLQQRTRDILQQQGLSGLAIHSGQTHRIFLDDQDYPFKVNPQFKAWLPVLDNPHCWLLVDGVNKPVLLFYRPVDFWHKVAELPNAFWVDFFDIRFLTRPEQVADHLPANKQEWAYLGGHLEVAELLGLGQPNPEAVLNYLHYHRAYKTAYELECLRDANRIGVRGHIAAKDSFMAGASEFEINLAYMKAVGQGANEAPYGNIVAINRNAAILHYTHLSAQRVPDAERYSFLIDAGVDVHGYASDITRTWAWRRGEFADLIAALDAQQQEIIEEIKPGRRYSELHLQMHHRLARLLQATELVDMSVDEMIHTGVTNVFFPHGLGHFLGLQVHDAGGFMQDERGTHLSAPEQFPYLRCTRVMEVGQVFTIEPGLYFIDSLLEPLRLGEQGKRVNWNKVEALRPYGGIRIEDNVVLHANGVENLTRQAGL.

Mn(2+) contacts are provided by Asp246, Asp257, His337, Glu382, and Glu421.

It belongs to the peptidase M24B family. Bacterial-type prolidase subfamily. Requires Mn(2+) as cofactor.

It catalyses the reaction Xaa-L-Pro dipeptide + H2O = an L-alpha-amino acid + L-proline. In terms of biological role, splits dipeptides with a prolyl residue in the C-terminal position. The protein is Xaa-Pro dipeptidase of Aeromonas hydrophila subsp. hydrophila (strain ATCC 7966 / DSM 30187 / BCRC 13018 / CCUG 14551 / JCM 1027 / KCTC 2358 / NCIMB 9240 / NCTC 8049).